The sequence spans 526 residues: Non-reducing end alpha-L-arabinofuranosidase BoGH43A (526 aa).

A signal peptide spans 1–20 (MRNALFLIFISLCSVCKSSA). Asp34 functions as the Proton acceptor in the catalytic mechanism. The Proton donor role is filled by Glu189.

Belongs to the glycosyl hydrolase 43 family.

It localises to the periplasm. The enzyme catalyses Hydrolysis of terminal non-reducing alpha-L-arabinofuranoside residues in alpha-L-arabinosides.. Its pathway is glucan metabolism; xyloglucan degradation. Functionally, alpha-L-arabinofuranosidase involved in xyloglucan degradation by mediating the cleavage of terminal non-reducing alpha-L-arabinofuranoside residues in xyloglucan branches, converting the 'S' units to 'X' units. The protein is Non-reducing end alpha-L-arabinofuranosidase BoGH43A of Bacteroides ovatus (strain ATCC 8483 / DSM 1896 / JCM 5824 / BCRC 10623 / CCUG 4943 / NCTC 11153).